A 243-amino-acid polypeptide reads, in one-letter code: Pyridoxine 5'-phosphate synthase (243 aa).

N9 contributes to the 3-amino-2-oxopropyl phosphate binding site. 11-12 (DH) lines the 1-deoxy-D-xylulose 5-phosphate pocket. R20 is a binding site for 3-amino-2-oxopropyl phosphate. The Proton acceptor role is filled by H45. Residues R47 and H52 each contribute to the 1-deoxy-D-xylulose 5-phosphate site. E72 functions as the Proton acceptor in the catalytic mechanism. Residue T102 participates in 1-deoxy-D-xylulose 5-phosphate binding. H193 serves as the catalytic Proton donor. 3-amino-2-oxopropyl phosphate contacts are provided by residues G194 and 215–216 (GH).

The protein belongs to the PNP synthase family. In terms of assembly, homooctamer; tetramer of dimers.

The protein resides in the cytoplasm. It carries out the reaction 3-amino-2-oxopropyl phosphate + 1-deoxy-D-xylulose 5-phosphate = pyridoxine 5'-phosphate + phosphate + 2 H2O + H(+). The protein operates within cofactor biosynthesis; pyridoxine 5'-phosphate biosynthesis; pyridoxine 5'-phosphate from D-erythrose 4-phosphate: step 5/5. Catalyzes the complicated ring closure reaction between the two acyclic compounds 1-deoxy-D-xylulose-5-phosphate (DXP) and 3-amino-2-oxopropyl phosphate (1-amino-acetone-3-phosphate or AAP) to form pyridoxine 5'-phosphate (PNP) and inorganic phosphate. This chain is Pyridoxine 5'-phosphate synthase, found in Photobacterium profundum (strain SS9).